The following is a 94-amino-acid chain: UPF0213 protein BH0048 (94 aa).

The 76-residue stretch at 1 to 76 (MNHYVYILEC…KHLSRRKKEQ (76 aa)) folds into the GIY-YIG domain.

It belongs to the UPF0213 family.

This Halalkalibacterium halodurans (strain ATCC BAA-125 / DSM 18197 / FERM 7344 / JCM 9153 / C-125) (Bacillus halodurans) protein is UPF0213 protein BH0048.